A 354-amino-acid polypeptide reads, in one-letter code: Probable L-ascorbate-6-phosphate lactonase UlaG (354 aa).

This sequence belongs to the UlaG family. It depends on a divalent metal cation as a cofactor.

Its subcellular location is the cytoplasm. It carries out the reaction L-ascorbate 6-phosphate + H2O = 3-dehydro-L-gulonate 6-phosphate. It functions in the pathway cofactor degradation; L-ascorbate degradation; D-xylulose 5-phosphate from L-ascorbate: step 1/4. Probably catalyzes the hydrolysis of L-ascorbate-6-P into 3-keto-L-gulonate-6-P. Is essential for L-ascorbate utilization under anaerobic conditions. The protein is Probable L-ascorbate-6-phosphate lactonase UlaG of Salmonella choleraesuis (strain SC-B67).